Here is a 230-residue protein sequence, read N- to C-terminus: MSPGNTTVVTTTVRNATPSLALDAGTIERFLAHSHRRRYPTRTDVFRPGDPAGTLYYVISGSVSIIAEEDDDRELVLGYFGSGEFVGEMGLFIESDTREVILRTRTQCELAEISYERLQQLFQTSLSPDAPKILYAIGVQLSKRLLDTTRKASRLAFLDVTDRIVRTLHDLAKEPEAMSHPQGTQLRVSRQELARLVGCSREMAGRVLKKLQADGLLHARGKTVVLYGTR.

18 to 139 lines the a nucleoside 3',5'-cyclic phosphate pocket; it reads PSLALDAGTI…APKILYAIGV (122 aa). Positions 158–230 constitute an HTH crp-type domain; the sequence is LDVTDRIVRT…GKTVVLYGTR (73 aa). Residues 190–209 constitute a DNA-binding region (H-T-H motif); the sequence is RQELARLVGCSREMAGRVLK.

In terms of assembly, homodimer.

The protein localises to the cytoplasm. With respect to regulation, allosterically inhibited by cyclic di-GMP (c-di-GMP), which binds to Clp and abolishes its ability to bind its target gene promoter. Its function is as follows. Global transcriptional regulator that regulates virulence factors production by activating or repressing the expression of a large set of genes in diffusible signal factor (DSF) pathway. The polypeptide is CRP-like protein Clp (clp) (Xanthomonas axonopodis pv. citri (strain 306)).